Here is a 423-residue protein sequence, read N- to C-terminus: MINIEDISKSSNESEEKQLKSTSTSSKPKYPFAAKSLFKGSNNIIPYYLSTSNTFQCVASESIQTWLLSDDGHIFTSSGNFVLDVSSGGYFVELVQLNSNSKTQIWTIDTTNNKIQNQGNGKYLDIDNLNICVAPLNGNATQKWTTFRRAPIPTGNWGYFQSKKLDSNNNYWGLSVLNNSTSYNTSVVMNKVQAKSIGQIWQMTNDGHILSRLDGNLVLDIGPSINGSKTNYYLNTNVYKANDLMQQWGINENNQIFNQYYPNLCIGFVGELGVDSTVNCVLAQPTSASDINFQWIANPTYSLNQIVSEVPEPFPAYTSGDLLASYQYLSNDATNGYTDDIRSLYTSINVSLEHFYVNVSNATCPSSIHSTEDFSNVQNQIKNELTYAINVRLVFDNYSDFYSKLFSQGSTNLTNLANLINVI.

The segment covering 1–19 (MINIEDISKSSNESEEKQL) has biased composition (basic and acidic residues). Positions 1–27 (MINIEDISKSSNESEEKQLKSTSTSSK) are disordered. 2 Ricin B-type lectin domains span residues 27-147 (KPKY…WTTF) and 118-251 (QGNG…WGIN).

It belongs to the cup family.

Its subcellular location is the cytoplasm. The protein resides in the membrane. Functionally, may play an important role in stabilizing and/or regulating the cell membrane during Ca(2+) stress or certain stages of development. The chain is Calcium up-regulated protein A (cupA) from Dictyostelium discoideum (Social amoeba).